A 725-amino-acid chain; its full sequence is Eukaryotic translation initiation factor 3 subunit B (725 aa).

Ser23 carries the phosphoserine modification. In terms of domain architecture, RRM spans 39–129 (TVVVIEGAPV…HTFVVRKLNQ (91 aa)). Ser135 carries the post-translational modification Phosphoserine. The residue at position 136 (Thr136) is a Phosphothreonine. WD repeat units lie at residues 190–229 (DREN…MCAR), 304–344 (DGKK…LVDK), and 347–386 (IKID…QPAR). The stretch at 630-671 (LTKEDMKKIRKKLKDYNRLFDEEDIAEQSSANRELAARRRQL) forms a coiled coil.

It belongs to the eIF-3 subunit B family. Component of the eukaryotic translation initiation factor 3 (eIF-3) complex. The eIF-3 complex appears to include tif32/eif3a, SPAC25G10.08/eif3b, tif33/eif3c, SPBC4C3.07/eif3f, tif35/eif3g and sum1/eif3i. This set of common subunits may also associate exclusively with either moe1/eif3d and int6/eif3e, or with SPAC821.05/eif3h and SPAC1751.03/eif3m. The eIF-3 complex may also include SPAC3A12.13c/eif3j.

It localises to the cytoplasm. RNA-binding component of the eukaryotic translation initiation factor 3 (eIF-3) complex, which is involved in protein synthesis of a specialized repertoire of mRNAs and, together with other initiation factors, stimulates binding of mRNA and methionyl-tRNAi to the 40S ribosome. The eIF-3 complex specifically targets and initiates translation of a subset of mRNAs involved in cell proliferation. The protein is Eukaryotic translation initiation factor 3 subunit B of Schizosaccharomyces pombe (strain 972 / ATCC 24843) (Fission yeast).